The following is a 110-amino-acid chain: Phosphoribosyl-ATP pyrophosphatase (110 aa).

It belongs to the PRA-PH family.

The protein localises to the cytoplasm. The enzyme catalyses 1-(5-phospho-beta-D-ribosyl)-ATP + H2O = 1-(5-phospho-beta-D-ribosyl)-5'-AMP + diphosphate + H(+). It participates in amino-acid biosynthesis; L-histidine biosynthesis; L-histidine from 5-phospho-alpha-D-ribose 1-diphosphate: step 2/9. This is Phosphoribosyl-ATP pyrophosphatase from Clostridium novyi (strain NT).